Reading from the N-terminus, the 305-residue chain is D-alanine--D-alanine ligase (305 aa).

The region spanning 99–300 (KLFFEKAGIR…YEEMIQTFVN (202 aa)) is the ATP-grasp domain. 126 to 181 (NFTGTYPVVVKPNQEGSTIGLTVAETEEELLQGIEEAFRHDDTILIEEFIAGTEVT) is an ATP binding site.

This sequence belongs to the D-alanine--D-alanine ligase family.

It is found in the cytoplasm. The catalysed reaction is 2 D-alanine + ATP = D-alanyl-D-alanine + ADP + phosphate + H(+). It functions in the pathway cell wall biogenesis; peptidoglycan biosynthesis. Functionally, cell wall formation. The protein is D-alanine--D-alanine ligase of Halalkalibacterium halodurans (strain ATCC BAA-125 / DSM 18197 / FERM 7344 / JCM 9153 / C-125) (Bacillus halodurans).